We begin with the raw amino-acid sequence, 397 residues long: Arginine biosynthesis bifunctional protein ArgJ (397 aa).

T147, K173, T184, E270, N392, and T397 together coordinate substrate. T184 functions as the Nucleophile in the catalytic mechanism.

This sequence belongs to the ArgJ family. In terms of assembly, heterotetramer of two alpha and two beta chains.

Its subcellular location is the cytoplasm. The catalysed reaction is N(2)-acetyl-L-ornithine + L-glutamate = N-acetyl-L-glutamate + L-ornithine. It carries out the reaction L-glutamate + acetyl-CoA = N-acetyl-L-glutamate + CoA + H(+). It functions in the pathway amino-acid biosynthesis; L-arginine biosynthesis; L-ornithine and N-acetyl-L-glutamate from L-glutamate and N(2)-acetyl-L-ornithine (cyclic): step 1/1. It participates in amino-acid biosynthesis; L-arginine biosynthesis; N(2)-acetyl-L-ornithine from L-glutamate: step 1/4. Catalyzes two activities which are involved in the cyclic version of arginine biosynthesis: the synthesis of N-acetylglutamate from glutamate and acetyl-CoA as the acetyl donor, and of ornithine by transacetylation between N(2)-acetylornithine and glutamate. The sequence is that of Arginine biosynthesis bifunctional protein ArgJ from Streptococcus thermophilus (strain CNRZ 1066).